Consider the following 182-residue polypeptide: Superoxide dismutase [Cu-Zn] (182 aa).

An N-terminal signal peptide occupies residues 1 to 19 (MFRTLTVVPLLALGLSLSA). C20 carries the N-palmitoyl cysteine lipid modification. A lipid anchor (S-diacylglycerol cysteine) is attached at C20. Residues H69, H71, and H95 each coordinate Cu cation. A disulfide bridge connects residues C76 and C175. The disordered stretch occupies residues 91–118 (AAGGHFDPGASHNHDGPHARNDQGHGGD). H95, H104, H115, and D118 together coordinate Zn(2+). Residues 102–115 (HNHDGPHARNDQGH) are compositionally biased toward basic and acidic residues.

Belongs to the Cu-Zn superoxide dismutase family. Cu cation serves as cofactor. Zn(2+) is required as a cofactor.

The protein localises to the cell membrane. The enzyme catalyses 2 superoxide + 2 H(+) = H2O2 + O2. In terms of biological role, destroys radicals which are normally produced within the cells and which are toxic to biological systems. This is Superoxide dismutase [Cu-Zn] (sodC) from Deinococcus radiodurans (strain ATCC 13939 / DSM 20539 / JCM 16871 / CCUG 27074 / LMG 4051 / NBRC 15346 / NCIMB 9279 / VKM B-1422 / R1).